The sequence spans 930 residues: Vacuolar membrane protease (930 aa).

Positions 1–28 (MPQEEVHDTSSVSDDNLTNTGGGGSNYY) are disordered. The Cytoplasmic portion of the chain corresponds to 1 to 49 (MPQEEVHDTSSVSDDNLTNTGGGGSNYYNSHNQPNVFVRAIRSIFGYRK). The chain crosses the membrane as a helical span at residues 50 to 70 (TSLTLFVILTIIFTIALSLYD). Topologically, residues 71-379 (NNLDLTIELP…YFFSSPISAL (309 aa)) are vacuolar. Residue asparagine 163 is glycosylated (N-linked (GlcNAc...) asparagine). Residues histidine 177 and aspartate 189 each coordinate Zn(2+). Catalysis depends on glutamate 222, which acts as the Proton acceptor. 3 residues coordinate Zn(2+): glutamate 223, glutamate 248, and histidine 320. N-linked (GlcNAc...) asparagine glycosylation occurs at asparagine 354. Residues 380–400 (VTINSVLIVLFPILSGPLLFI) traverse the membrane as a helical segment. Over 401–411 (TVRYKKWKIGT) the chain is Cytoplasmic. Residues 412–432 (SNFLSLPLAIVLTVAIVMIVV) traverse the membrane as a helical segment. Topologically, residues 433 to 449 (NQGFQIANPFLPSSHPL) are vacuolar. A helical membrane pass occupies residues 450–470 (LLVATTTSISLLIYYVFLNGV). Topologically, residues 471-480 (NWVSPSGDQK) are cytoplasmic. The helical transmembrane segment at 481-501 (LITIIEISFIYWLILIYVTHG) threads the bilayer. Residues 502 to 514 (LSQNKIGDDHTGE) lie on the Vacuolar side of the membrane. The helical transmembrane segment at 515 to 535 (FPFTVLFFLEATASLFGLIGW) threads the bilayer. At 536-598 (TFSRSIKQSS…FGYDWSLQYL (63 aa)) the chain is on the cytoplasmic side. A disordered region spans residues 542-570 (KQSSNDGSDEPLLTGTAERYGSDDTDEDE). Residues 599-619 (LIVPISSLIIFNSGWLVLDGI) form a helical membrane-spanning segment. An N-linked (GlcNAc...) asparagine glycan is attached at asparagine 620. Over 620–631 (NKSIQESFAAEN) the chain is Vacuolar. The chain crosses the membrane as a helical span at residues 632–652 (LIYLLIQLFSQFWILPILPFV). Over 653–657 (YKLNR) the chain is Cytoplasmic. Residues 658–678 (FIVFGLTIFAISGVALISFLD) form a helical membrane-spanning segment. Topologically, residues 679–930 (PFNQENPLKL…LVSVSLKIEV (252 aa)) are vacuolar. N-linked (GlcNAc...) asparagine glycosylation is found at asparagine 697, asparagine 768, asparagine 808, and asparagine 890.

It belongs to the peptidase M28 family. Zn(2+) serves as cofactor.

It localises to the vacuole membrane. Its function is as follows. May be involved in vacuolar sorting and osmoregulation. The polypeptide is Vacuolar membrane protease (Candida dubliniensis (strain CD36 / ATCC MYA-646 / CBS 7987 / NCPF 3949 / NRRL Y-17841) (Yeast)).